Consider the following 321-residue polypeptide: Aspartate carbamoyltransferase catalytic subunit (321 aa).

Positions 60 and 61 each coordinate carbamoyl phosphate. Lysine 88 provides a ligand contact to L-aspartate. Carbamoyl phosphate is bound by residues arginine 110, histidine 138, and glutamine 141. L-aspartate-binding residues include arginine 171 and arginine 225. The carbamoyl phosphate site is built by glycine 266 and proline 267.

It belongs to the aspartate/ornithine carbamoyltransferase superfamily. ATCase family. Heterododecamer (2C3:3R2) of six catalytic PyrB chains organized as two trimers (C3), and six regulatory PyrI chains organized as three dimers (R2).

It carries out the reaction carbamoyl phosphate + L-aspartate = N-carbamoyl-L-aspartate + phosphate + H(+). Its pathway is pyrimidine metabolism; UMP biosynthesis via de novo pathway; (S)-dihydroorotate from bicarbonate: step 2/3. Catalyzes the condensation of carbamoyl phosphate and aspartate to form carbamoyl aspartate and inorganic phosphate, the committed step in the de novo pyrimidine nucleotide biosynthesis pathway. The polypeptide is Aspartate carbamoyltransferase catalytic subunit (Sorangium cellulosum (strain So ce56) (Polyangium cellulosum (strain So ce56))).